The following is a 218-amino-acid chain: 7-cyano-7-deazaguanine synthase (218 aa).

9 to 19 is an ATP binding site; it reads YSGGMDSFTVL. Zn(2+) contacts are provided by Cys-185, Cys-193, Cys-196, and Cys-199.

This sequence belongs to the QueC family. It depends on Zn(2+) as a cofactor.

The catalysed reaction is 7-carboxy-7-deazaguanine + NH4(+) + ATP = 7-cyano-7-deazaguanine + ADP + phosphate + H2O + H(+). It functions in the pathway purine metabolism; 7-cyano-7-deazaguanine biosynthesis. Its function is as follows. Catalyzes the ATP-dependent conversion of 7-carboxy-7-deazaguanine (CDG) to 7-cyano-7-deazaguanine (preQ(0)). The sequence is that of 7-cyano-7-deazaguanine synthase from Pseudoalteromonas translucida (strain TAC 125).